Reading from the N-terminus, the 186-residue chain is ATP synthase subunit delta (186 aa).

This sequence belongs to the ATPase delta chain family. In terms of assembly, F-type ATPases have 2 components, F(1) - the catalytic core - and F(0) - the membrane proton channel. F(1) has five subunits: alpha(3), beta(3), gamma(1), delta(1), epsilon(1). F(0) has three main subunits: a(1), b(2) and c(10-14). The alpha and beta chains form an alternating ring which encloses part of the gamma chain. F(1) is attached to F(0) by a central stalk formed by the gamma and epsilon chains, while a peripheral stalk is formed by the delta and b chains.

It localises to the cell inner membrane. Functionally, f(1)F(0) ATP synthase produces ATP from ADP in the presence of a proton or sodium gradient. F-type ATPases consist of two structural domains, F(1) containing the extramembraneous catalytic core and F(0) containing the membrane proton channel, linked together by a central stalk and a peripheral stalk. During catalysis, ATP synthesis in the catalytic domain of F(1) is coupled via a rotary mechanism of the central stalk subunits to proton translocation. This protein is part of the stalk that links CF(0) to CF(1). It either transmits conformational changes from CF(0) to CF(1) or is implicated in proton conduction. This Azorhizobium caulinodans (strain ATCC 43989 / DSM 5975 / JCM 20966 / LMG 6465 / NBRC 14845 / NCIMB 13405 / ORS 571) protein is ATP synthase subunit delta.